The following is a 329-amino-acid chain: Cathepsin K (329 aa).

Positions 1–15 (MWGLTVLLLPVVSFA) are cleaved as a signal peptide. The propeptide at 16–114 (LYPEEILDTQ…TLYIPDWEGR (99 aa)) is activation peptide. An N-linked (GlcNAc...) asparagine glycan is attached at asparagine 103. 3 disulfide bridges follow: cysteine 136/cysteine 177, cysteine 170/cysteine 210, and cysteine 269/cysteine 318. The active site involves cysteine 139. Catalysis depends on residues histidine 276 and asparagine 296.

It belongs to the peptidase C1 family.

It is found in the lysosome. The protein resides in the secreted. It localises to the apical cell membrane. It catalyses the reaction Broad proteolytic activity. With small-molecule substrates and inhibitors, the major determinant of specificity is P2, which is preferably Leu, Met &gt; Phe, and not Arg.. Its function is as follows. Thiol protease involved in osteoclastic bone resorption and may participate partially in the disorder of bone remodeling. Displays potent endoprotease activity against fibrinogen at acid pH. May play an important role in extracellular matrix degradation. Involved in the release of thyroid hormone thyroxine (T4) by limited proteolysis of TG/thyroglobulin in the thyroid follicle lumen. This chain is Cathepsin K (CTSK), found in Bos taurus (Bovine).